A 244-amino-acid polypeptide reads, in one-letter code: 1-(5-phosphoribosyl)-5-[(5-phosphoribosylamino)methylideneamino] imidazole-4-carboxamide isomerase (244 aa).

The active-site Proton acceptor is aspartate 10. Aspartate 129 serves as the catalytic Proton donor.

It belongs to the HisA/HisF family.

It is found in the cytoplasm. It carries out the reaction 1-(5-phospho-beta-D-ribosyl)-5-[(5-phospho-beta-D-ribosylamino)methylideneamino]imidazole-4-carboxamide = 5-[(5-phospho-1-deoxy-D-ribulos-1-ylimino)methylamino]-1-(5-phospho-beta-D-ribosyl)imidazole-4-carboxamide. It functions in the pathway amino-acid biosynthesis; L-histidine biosynthesis; L-histidine from 5-phospho-alpha-D-ribose 1-diphosphate: step 4/9. The polypeptide is 1-(5-phosphoribosyl)-5-[(5-phosphoribosylamino)methylideneamino] imidazole-4-carboxamide isomerase (Rhodococcus jostii (strain RHA1)).